A 611-amino-acid chain; its full sequence is Protein Pixie (611 aa).

4Fe-4S ferredoxin-type domains lie at 15–45 and 54–83; these read RIAI…MGKL and KIAS…IINL. 2 ABC transporter domains span residues 78–323 and 350–570; these read ITII…FLDG and IKRM…LELL. ATP is bound by residues 118 to 125 and 387 to 394; these read GQNGIGKS and GENGTGKT.

It belongs to the ABC transporter superfamily. ABCE family. Interacts with components of eIF3 complex, namely eIF3a, eIF3j, eIF3b, eIF3c and eIF3i. Associates with the 40S ribosome subunit in an ATP-dependent manner and independently from the presence of the eIF3 complex. Forms a complex with Git and Pak; the interaction with Pak may be mediated by pix/dPIX. Ubiquitinated by Cnot4. Ubiquitination mediates the recruitment of autophagy receptors to the mitochondrial outer membrane and initiates mitophagy. Expressed in early and late larval imaginal disks (at protein level).

The protein resides in the cytoplasm. Plays a role in translation initiation and quality control of translation. Together with pelo and HBS1, is required for 48S complex formation from 80S ribosomes and dissociation of vacant 80S ribosomes. Stabilizes core components of eIF3 complex promoting their assembly into translation initiation-competent complexes. Together with pelo and HBS1, recognizes stalled ribosomes and promotes dissociation of elongation complexes assembled on non-stop mRNAs; this triggers endonucleolytic cleavage of the mRNA, a mechanism to release non-functional ribosomes and to degrade damaged mRNAs as part of the No-Go Decay (NGD) pathway. Plays a role in the regulation of mRNA turnover. Plays a role in quality control of translation of mitochondrial outer membrane-localized mRNA. As part of the Pink1-regulated signaling, ubiquitinated by Cnot4 upon mitochondria damage; this modification generates polyubiquitin signals that recruits autophagy receptors to the mitochondrial outer membrane to initiate mitophagy. Required in the wing disk for cell division and growth as well as cell survival. During muscle embryogenesis, required for the recruitment of Pak to muscle attachments in the embryo, hence may play a role in proper muscle morphogenesis and proper guidance and targeting of subsets of myotubes. This is Protein Pixie from Drosophila melanogaster (Fruit fly).